The following is a 175-amino-acid chain: ADP-ribosylation factor 6 (175 aa).

Residue glycine 2 is the site of N-myristoyl glycine attachment. GTP is bound by residues 20–27, 63–67, and 122–125; these read GLDAAGKT, DVGGQ, and NKQD.

Belongs to the small GTPase superfamily. Arf family. In terms of tissue distribution, expressed in the head (at protein level).

It is found in the golgi apparatus. With respect to regulation, activation is generally mediated by a guanine exchange factor (GEF), while inactivation through hydrolysis of bound GTP is catalyzed by a GTPase activating protein (GAP). May be activated by Efa6. In terms of biological role, GTP-binding protein involved in protein trafficking; may modulate vesicle budding and uncoating within the Golgi apparatus. Promotes cell movement and remodeling of the actin cytoskeleton during compound eye morphogenesis. Required for normal ethanol-induced tolerance and preference. Probably after Efa6-mediated activation, counteracts ethanol-induced sedation. The protein is ADP-ribosylation factor 6 of Drosophila melanogaster (Fruit fly).